The following is a 157-amino-acid chain: Acetyltransferase PseH (157 aa).

The N-acetyltransferase domain occupies 5–152 (KNFAELNSQE…YYVCLKQSHC (148 aa)).

Functionally, catalyzes the third step in the biosynthesis of pseudaminic acid, a sialic-acid-like sugar that is used to modify flagellin. Mediates N-4 acetylation of UDP-4-amino-4,6-dideoxy-beta-L-AltNAc to form UDP-2,4-diacetamido-2,4,6-trideoxy-beta-L-altropyranose. In Campylobacter jejuni subsp. jejuni serotype O:2 (strain ATCC 700819 / NCTC 11168), this protein is Acetyltransferase PseH (pseH).